Reading from the N-terminus, the 523-residue chain is Leucine-rich repeat-containing protein 27 (523 aa).

Residues 1–26 (MEDTSPQAVAEKAAKDPKAAKDLKDD) are disordered. The span at 12–26 (KAAKDPKAAKDLKDD) shows a compositional bias: basic and acidic residues. 5 LRR repeats span residues 55–76 (SSPV…FKIP), 77–98 (NLQQ…FFQL), 101–122 (NLTW…IGSH), 124–145 (HLKT…LGQV), and 147–168 (TLTA…IVQK). Disordered regions lie at residues 206–236 (QYPV…ADFF) and 372–394 (REQT…HSNM). Basic and acidic residues-rich tracts occupy residues 227–236 (DQEKEKADFF) and 372–385 (REQT…RELS). Coiled coils occupy residues 335 to 374 (VHAN…WREQ) and 463 to 494 (MQDI…TLNK). Residues 503–523 (GNLSLHPPASQPQNIFFNTKS) are disordered. Positions 513 to 523 (QPQNIFFNTKS) are enriched in polar residues.

In Mus musculus (Mouse), this protein is Leucine-rich repeat-containing protein 27 (Lrrc27).